We begin with the raw amino-acid sequence, 752 residues long: Maltodextrin phosphorylase (752 aa).

K603 carries the N6-(pyridoxal phosphate)lysine modification.

It belongs to the glycogen phosphorylase family. Requires pyridoxal 5'-phosphate as cofactor.

It carries out the reaction [(1-&gt;4)-alpha-D-glucosyl](n) + phosphate = [(1-&gt;4)-alpha-D-glucosyl](n-1) + alpha-D-glucose 1-phosphate. In terms of biological role, phosphorylase is an important allosteric enzyme in carbohydrate metabolism. Enzymes from different sources differ in their regulatory mechanisms and in their natural substrates. However, all known phosphorylases share catalytic and structural properties. This Streptococcus pneumoniae serotype 4 (strain ATCC BAA-334 / TIGR4) protein is Maltodextrin phosphorylase (malP).